The chain runs to 65 residues: Large ribosomal subunit protein uL29 (65 aa).

The protein belongs to the universal ribosomal protein uL29 family.

The sequence is that of Large ribosomal subunit protein uL29 from Acinetobacter baylyi (strain ATCC 33305 / BD413 / ADP1).